The following is a 130-amino-acid chain: Methylglyoxal synthase (130 aa).

An MGS-like domain is found at 1 to 130 (MMTRPRIALI…AELSRVEAQP (130 aa)). Substrate is bound by residues histidine 12, lysine 16, 38 to 41 (TGTT), and 58 to 59 (SG). Aspartate 64 (proton donor/acceptor) is an active-site residue. Histidine 91 lines the substrate pocket.

This sequence belongs to the methylglyoxal synthase family.

It carries out the reaction dihydroxyacetone phosphate = methylglyoxal + phosphate. Functionally, catalyzes the formation of methylglyoxal from dihydroxyacetone phosphate. The protein is Methylglyoxal synthase of Cupriavidus pinatubonensis (strain JMP 134 / LMG 1197) (Cupriavidus necator (strain JMP 134)).